Reading from the N-terminus, the 496-residue chain is uncharacterized protein (496 aa).

Transmembrane regions (helical) follow at residues 33 to 53 (FLKG…LIFA), 89 to 109 (LNFL…YTLI), 127 to 147 (PWFV…FTFF), 154 to 174 (VFNL…YEIF), 193 to 213 (LIIA…TPLV), 247 to 267 (IILI…NTNF), 285 to 305 (LWFI…VFAY), 320 to 340 (LWVY…YMVF), 355 to 375 (LLNL…VTLF), 382 to 402 (SLIN…IYIF), 411 to 431 (LLVL…IVGF), and 455 to 475 (VQIM…YLTI).

The protein resides in the cell membrane. This is an uncharacterized protein from Ureaplasma parvum serovar 3 (strain ATCC 700970).